Reading from the N-terminus, the 527-residue chain is Glucose-6-phosphate isomerase (527 aa).

Catalysis depends on Glu-323, which acts as the Proton donor. Residues His-352 and Lys-454 contribute to the active site.

It belongs to the GPI family.

The protein localises to the cytoplasm. The enzyme catalyses alpha-D-glucose 6-phosphate = beta-D-fructose 6-phosphate. Its pathway is carbohydrate biosynthesis; gluconeogenesis. The protein operates within carbohydrate degradation; glycolysis; D-glyceraldehyde 3-phosphate and glycerone phosphate from D-glucose: step 2/4. Its function is as follows. Catalyzes the reversible isomerization of glucose-6-phosphate to fructose-6-phosphate. The sequence is that of Glucose-6-phosphate isomerase from Prochlorococcus marinus (strain MIT 9515).